Reading from the N-terminus, the 182-residue chain is UPF0397 protein SAG1634 (182 aa).

5 helical membrane-spanning segments follow: residues 9–29 (VVAT…VNIP), 42–62 (AVLA…TGFI), 74–94 (SPWW…GFFA), 109–129 (LLLF…VVAP), and 148–168 (FLSS…LLLA).

This sequence belongs to the UPF0397 family.

Its subcellular location is the cell membrane. The protein is UPF0397 protein SAG1634 of Streptococcus agalactiae serotype V (strain ATCC BAA-611 / 2603 V/R).